The primary structure comprises 210 residues: Pyridoxine/pyridoxamine 5'-phosphate oxidase (210 aa).

Residues 7–10 and Lys65 contribute to the substrate site; that span reads RQSY. Residues 60–65, 75–76, Arg81, Lys82, and Gln104 contribute to the FMN site; these read RIVLIK and FT. The substrate site is built by Tyr122, Arg126, and Ser130. Residues 139–140 and Trp182 contribute to the FMN site; that span reads QS. 188-190 serves as a coordination point for substrate; sequence RLH. Arg192 contacts FMN.

This sequence belongs to the pyridoxamine 5'-phosphate oxidase family. Homodimer. FMN is required as a cofactor.

It catalyses the reaction pyridoxamine 5'-phosphate + O2 + H2O = pyridoxal 5'-phosphate + H2O2 + NH4(+). The enzyme catalyses pyridoxine 5'-phosphate + O2 = pyridoxal 5'-phosphate + H2O2. The protein operates within cofactor metabolism; pyridoxal 5'-phosphate salvage; pyridoxal 5'-phosphate from pyridoxamine 5'-phosphate: step 1/1. It participates in cofactor metabolism; pyridoxal 5'-phosphate salvage; pyridoxal 5'-phosphate from pyridoxine 5'-phosphate: step 1/1. Its function is as follows. Catalyzes the oxidation of either pyridoxine 5'-phosphate (PNP) or pyridoxamine 5'-phosphate (PMP) into pyridoxal 5'-phosphate (PLP). The protein is Pyridoxine/pyridoxamine 5'-phosphate oxidase of Bordetella bronchiseptica (strain ATCC BAA-588 / NCTC 13252 / RB50) (Alcaligenes bronchisepticus).